The chain runs to 599 residues: Sulfite reductase [NADPH] flavoprotein alpha-component (599 aa).

Residues 64-202 form the Flavodoxin-like domain; sequence ITLISASQTG…AAAEWRARVV (139 aa). FMN-binding positions include 70 to 75, 117 to 120, and 153 to 162; these read SQTGNA, STQG, and LGDTSYEFFC. Positions 234 to 448 constitute an FAD-binding FR-type domain; sequence EAPLTATLSV…IEHNDNFRLP (215 aa). Residues Thr-322, Ala-356, 386–389, 404–406, Tyr-410, and 419–422 each bind FAD; these read RLYS, TVG, and GGAS. Residues 519 to 520, 525 to 529, and Asp-561 each bind NADP(+); these read SR and KIYVQ. Residue Tyr-599 participates in FAD binding.

It belongs to the NADPH-dependent sulphite reductase flavoprotein subunit CysJ family. The protein in the N-terminal section; belongs to the flavodoxin family. In the C-terminal section; belongs to the flavoprotein pyridine nucleotide cytochrome reductase family. In terms of assembly, alpha(8)-beta(8). The alpha component is a flavoprotein, the beta component is a hemoprotein. The cofactor is FAD. It depends on FMN as a cofactor.

It carries out the reaction hydrogen sulfide + 3 NADP(+) + 3 H2O = sulfite + 3 NADPH + 4 H(+). The protein operates within sulfur metabolism; hydrogen sulfide biosynthesis; hydrogen sulfide from sulfite (NADPH route): step 1/1. Functionally, component of the sulfite reductase complex that catalyzes the 6-electron reduction of sulfite to sulfide. This is one of several activities required for the biosynthesis of L-cysteine from sulfate. The flavoprotein component catalyzes the electron flow from NADPH -&gt; FAD -&gt; FMN to the hemoprotein component. This Klebsiella pneumoniae subsp. pneumoniae (strain ATCC 700721 / MGH 78578) protein is Sulfite reductase [NADPH] flavoprotein alpha-component.